The following is a 1221-amino-acid chain: DNA-directed RNA polymerase subunit beta' (1221 aa).

Zn(2+) is bound by residues C60, C62, C75, and C78. D449, D451, and D453 together coordinate Mg(2+). C821, C896, C903, and C906 together coordinate Zn(2+).

Belongs to the RNA polymerase beta' chain family. In terms of assembly, the RNAP catalytic core consists of 2 alpha, 1 beta, 1 beta' and 1 omega subunit. When a sigma factor is associated with the core the holoenzyme is formed, which can initiate transcription. Requires Mg(2+) as cofactor. The cofactor is Zn(2+).

The catalysed reaction is RNA(n) + a ribonucleoside 5'-triphosphate = RNA(n+1) + diphosphate. In terms of biological role, DNA-dependent RNA polymerase catalyzes the transcription of DNA into RNA using the four ribonucleoside triphosphates as substrates. In Lactobacillus delbrueckii subsp. bulgaricus (strain ATCC BAA-365 / Lb-18), this protein is DNA-directed RNA polymerase subunit beta'.